Consider the following 460-residue polypeptide: Chromosomal replication initiator protein DnaA (460 aa).

Positions 1–78 (MENFWQACSA…VPVEVQFVLD (78 aa)) are domain I, interacts with DnaA modulators. Positions 78-123 (DPRLVAARRPAAQASVVSDRADDVPSNVLEPIPSNATDHTPRRDQS) are domain II. Positions 124–340 (RINTALTFDS…GALRKILAYS (217 aa)) are domain III, AAA+ region. Gly-168, Gly-170, Lys-171, and Thr-172 together coordinate ATP. The tract at residues 341–460 (RFHGKDITIE…LHVLEQTLKG (120 aa)) is domain IV, binds dsDNA.

Belongs to the DnaA family. In terms of assembly, oligomerizes as a right-handed, spiral filament on DNA at oriC.

The protein resides in the cytoplasm. Functionally, plays an essential role in the initiation and regulation of chromosomal replication. ATP-DnaA binds to the origin of replication (oriC) to initiate formation of the DNA replication initiation complex once per cell cycle. Binds the DnaA box (a 9 base pair repeat at the origin) and separates the double-stranded (ds)DNA. Forms a right-handed helical filament on oriC DNA; dsDNA binds to the exterior of the filament while single-stranded (ss)DNA is stabiized in the filament's interior. The ATP-DnaA-oriC complex binds and stabilizes one strand of the AT-rich DNA unwinding element (DUE), permitting loading of DNA polymerase. After initiation quickly degrades to an ADP-DnaA complex that is not apt for DNA replication. Binds acidic phospholipids. The sequence is that of Chromosomal replication initiator protein DnaA from Herminiimonas arsenicoxydans.